A 471-amino-acid chain; its full sequence is Glutamate--tRNA ligase (471 aa).

A 'HIGH' region motif is present at residues 9 to 19 (PSPTGYLHVGG). The Zn(2+) site is built by Cys98, Cys100, Cys125, and His127. Residues 237-241 (KLSKR) carry the 'KMSKS' region motif. Position 240 (Lys240) interacts with ATP.

It belongs to the class-I aminoacyl-tRNA synthetase family. Glutamate--tRNA ligase type 1 subfamily. In terms of assembly, monomer. The cofactor is Zn(2+).

It localises to the cytoplasm. It catalyses the reaction tRNA(Glu) + L-glutamate + ATP = L-glutamyl-tRNA(Glu) + AMP + diphosphate. In terms of biological role, catalyzes the attachment of glutamate to tRNA(Glu) in a two-step reaction: glutamate is first activated by ATP to form Glu-AMP and then transferred to the acceptor end of tRNA(Glu). This is Glutamate--tRNA ligase from Shigella sonnei (strain Ss046).